The primary structure comprises 314 residues: tRNA uridine(34) hydroxylase (314 aa).

In terms of domain architecture, Rhodanese spans 140 to 234; it reads ARDDVILIDT…YLEETPPDES (95 aa). Catalysis depends on Cys194, which acts as the Cysteine persulfide intermediate.

It belongs to the TrhO family.

It carries out the reaction uridine(34) in tRNA + AH2 + O2 = 5-hydroxyuridine(34) in tRNA + A + H2O. In terms of biological role, catalyzes oxygen-dependent 5-hydroxyuridine (ho5U) modification at position 34 in tRNAs. This chain is tRNA uridine(34) hydroxylase, found in Acinetobacter baumannii (strain AYE).